We begin with the raw amino-acid sequence, 484 residues long: Cobyric acid synthase (484 aa).

In terms of domain architecture, GATase cobBQ-type spans 253 to 430 (SLRVAVVRFP…WHGAFEHDEF (178 aa)). Cys-334 functions as the Nucleophile in the catalytic mechanism. Residue His-422 is part of the active site.

The protein belongs to the CobB/CobQ family. CobQ subfamily.

Its pathway is cofactor biosynthesis; adenosylcobalamin biosynthesis. Its function is as follows. Catalyzes amidations at positions B, D, E, and G on adenosylcobyrinic A,C-diamide. NH(2) groups are provided by glutamine, and one molecule of ATP is hydrogenolyzed for each amidation. The sequence is that of Cobyric acid synthase from Cutibacterium acnes (strain DSM 16379 / KPA171202) (Propionibacterium acnes).